We begin with the raw amino-acid sequence, 359 residues long: DNA polymerase IV (359 aa).

Residues 4-184 form the UmuC domain; that stretch reads IVHVDMDAFY…LKVNRIPGVG (181 aa). 2 residues coordinate Mg(2+): D8 and D102. E103 is an active-site residue.

It belongs to the DNA polymerase type-Y family. Monomer. The cofactor is Mg(2+).

Its subcellular location is the cytoplasm. The enzyme catalyses DNA(n) + a 2'-deoxyribonucleoside 5'-triphosphate = DNA(n+1) + diphosphate. Poorly processive, error-prone DNA polymerase involved in untargeted mutagenesis. Copies undamaged DNA at stalled replication forks, which arise in vivo from mismatched or misaligned primer ends. These misaligned primers can be extended by PolIV. Exhibits no 3'-5' exonuclease (proofreading) activity. May be involved in translesional synthesis, in conjunction with the beta clamp from PolIII. The chain is DNA polymerase IV from Xanthomonas euvesicatoria pv. vesicatoria (strain 85-10) (Xanthomonas campestris pv. vesicatoria).